The chain runs to 540 residues: Chaperonin GroEL (540 aa).

ATP is bound by residues Thr-30–Pro-33, Lys-51, Asp-87–Thr-91, Gly-415, and Asp-495.

This sequence belongs to the chaperonin (HSP60) family. Forms a cylinder of 14 subunits composed of two heptameric rings stacked back-to-back. Interacts with the co-chaperonin GroES.

Its subcellular location is the cytoplasm. The enzyme catalyses ATP + H2O + a folded polypeptide = ADP + phosphate + an unfolded polypeptide.. In terms of biological role, together with its co-chaperonin GroES, plays an essential role in assisting protein folding. The GroEL-GroES system forms a nano-cage that allows encapsulation of the non-native substrate proteins and provides a physical environment optimized to promote and accelerate protein folding. This Serratia marcescens protein is Chaperonin GroEL.